We begin with the raw amino-acid sequence, 664 residues long: Cyclic nucleotide-gated channel alpha-2 (664 aa).

A compositionally biased stretch (polar residues) spans M1 to K10. The segment at M1 to E51 is disordered. The Cytoplasmic portion of the chain corresponds to M1–L146. A helical membrane pass occupies residues F147–D168. The Extracellular segment spans residues L169–L178. Residues V179–G199 form a helical membrane-spanning segment. Residues F200–K224 are Cytoplasmic-facing. A helical membrane pass occupies residues L225–H243. Topologically, residues S244 to R248 are extracellular. Residues F249–T267 form a helical membrane-spanning segment. The Cytoplasmic portion of the chain corresponds to R268–I274. The tract at residues P272 to M380 is ion conduction pathway. Residues F275–I298 traverse the membrane as a helical segment. Over S299–Y321 the chain is Extracellular. Transmembrane regions (helical) follow at residues L322–I356 and F357–N381. Positions T339 to E342 are selectivity filter. The segment at A382 to Q458 is C-linker. Residues A382 to E664 are Cytoplasmic-facing. The interval A462–K582 is cyclic nucleotide-binding domain. 4 residues coordinate 3',5'-cyclic GMP: G522, S525, R538, and T539. Residues R538 and T539 each contribute to the 3',5'-cyclic AMP site. Positions V599–D653 form a coiled coil.

Belongs to the cyclic nucleotide-gated cation channel (TC 1.A.1.5) family. CNGA2 subfamily. The olfactory cyclic nucleotide-gated channel is an heterotetramer composed of CNGA2, CNGA4 and CNGB1b subunits with 2:1:1 stoichiometry. In terms of tissue distribution, olfactory neurons. Widely expressed in brain, enriched in deep cerebellar nuclei, olfactory bulb mitral cells and cerebellar Purkinje neurons. Expressed in olfactory sensory cilia (at protein level).

It localises to the cell projection. Its subcellular location is the cilium membrane. It catalyses the reaction Ca(2+)(in) = Ca(2+)(out). It carries out the reaction Na(+)(in) = Na(+)(out). The enzyme catalyses K(+)(in) = K(+)(out). The catalysed reaction is NH4(+)(in) = NH4(+)(out). It catalyses the reaction Rb(+)(in) = Rb(+)(out). It carries out the reaction Li(+)(in) = Li(+)(out). The enzyme catalyses Cs(+)(in) = Cs(+)(out). Its activity is regulated as follows. The channel activity is inhibited by L-cis diltiazem. Pore-forming subunit of the olfactory cyclic nucleotide-gated channel. Operates in the cilia of olfactory sensory neurons where chemical stimulation of the odorant is converted to an electrical signal. Mediates odorant-induced cAMP-dependent Ca(2+) influx triggering neuron depolarization. The rise of intracellular Ca(2+) levels potentiates the olfactory response by activating Ca(2+)-dependent Cl(-) channels, but it also serves as a negative feedback signal to desensitize the channel for rapid adaptation to odorants. Conducts cAMP- and cGMP-gated ion currents, with permeability for monovalent and divalent cations. The sequence is that of Cyclic nucleotide-gated channel alpha-2 from Rattus norvegicus (Rat).